An 855-amino-acid polypeptide reads, in one-letter code: MAALGVAEAVAAPHPAEGAETAEAVELSRALSRLLPGLEADSKPGRRRALEALRRALEEPGPAADPTAFQGPWARLLLPRLLRCLSDPAEGCRALAVHLLDLGLRRAARPRDALPRLLPALAARLAGPVPARRPPEACEELRLALVQLLGLAVDLCGAALAPHLDDALRALRCSLLDPFAAVRRESCSCAAALAQATPDHFHMQSESLIGPLMQTISHQHWKVRVAAIEATGAVIHFGNGKSVDDVLSHFAQRLFDDVPQVRRAVASVVGGWLLCLRDRYSFFHKLIPLLLSSLNDEVPEVRQLAASLWEDVGLQWQKENEEDLKDKLDFAPPTPPHYPPHERRPVLGCRELVFRNLSKILPALCHDITDWVVGTRVKSAQLLPVLLLHAEDHATQHLEVVLRTLFQACTDEEAAVVQSCTRSAELVGTFVSPEVFLKLILSTLKKTPSASGLLVLASAMRGCPREALQPHLAAIATELAQAHICQASENDLYLERLLLCVQALVSVCHEDCGVASLQLLDVLLTIVALAGATGLRDKAQETMDSLAMVEGVSSCQDLYRKHIGPLLERVTASHLDWTAHSPELLQFSVIVAQSGPALGEALPHVVPTLRACLQPSQDPQMRLKLFSILSTVLLRATDTINSQGQFPSYLETVTKDILAPNLQWHAGRTAAAIRTAAVSCLWALTSSEVLSAEQIRDVQETLMPQVLTTLEEDSKMTRLISCRIINTFLKTSGGMTDPEKLIRIYPELLKRLDDVSNDVRMAAASTLVTWLQCVKGANAKSYYQSSVQYLYRELLVHLDDPERAIQDAILEVLKEGSGLFPDLLVRETEAVIHKHRSATYCEQLLQHVQAVPATQ.

Ala2 bears the N-acetylalanine mark. HEAT repeat units lie at residues 71-109 (GPWARLLLPRLLRCLSDPAEGCRALAVHLLDLGLRRAAR), 202-240 (HMQSESLIGPLMQTISHQHWKVRVAAIEATGAVIHFGNG), 241-278 (KSVDDVLSHFAQRLFDDVPQVRRAVASVVGGWLLCLRD), 280-318 (YSFFHKLIPLLLSSLNDEVPEVRQLAASLWEDVGLQWQK), 354-376 (FRNLSKILPALCHDITDWVVGTR), 377-414 (VKSAQLLPVLLLHAEDHATQHLEVVLRTLFQACTDEEA), 599-638 (GEALPHVVPTLRACLQPSQDPQMRLKLFSILSTVLLRATD), 696-734 (RDVQETLMPQVLTTLEEDSKMTRLISCRIINTFLKTSGG), 738-776 (PEKLIRIYPELLKRLDDVSNDVRMAAASTLVTWLQCVKG), and 784-822 (QSSVQYLYRELLVHLDDPERAIQDAILEVLKEGSGLFPD).

It belongs to the DNAAF5 family. Interacts with DNAI2; probably involved in outer arm dynein assembly. As to expression, expressed in nasal epithelium and lung epithelium by ciliated cells (at protein level).

The protein resides in the cytoplasm. It localises to the dynein axonemal particle. In terms of biological role, cytoplasmic protein involved in the delivery of the dynein machinery to the motile cilium. It is required for the assembly of the axonemal dynein inner and outer arms, two structures attached to the peripheral outer doublet A microtubule of the axoneme, that play a crucial role in cilium motility. The protein is Dynein axonemal assembly factor 5 of Homo sapiens (Human).